A 311-amino-acid chain; its full sequence is Probable branched-chain-amino-acid aminotransferase (311 aa).

Residue Lys160 is modified to N6-(pyridoxal phosphate)lysine.

It belongs to the class-IV pyridoxal-phosphate-dependent aminotransferase family. Pyridoxal 5'-phosphate is required as a cofactor.

The catalysed reaction is L-leucine + 2-oxoglutarate = 4-methyl-2-oxopentanoate + L-glutamate. It carries out the reaction L-isoleucine + 2-oxoglutarate = (S)-3-methyl-2-oxopentanoate + L-glutamate. The enzyme catalyses L-valine + 2-oxoglutarate = 3-methyl-2-oxobutanoate + L-glutamate. It participates in amino-acid biosynthesis; L-isoleucine biosynthesis; L-isoleucine from 2-oxobutanoate: step 4/4. The protein operates within amino-acid biosynthesis; L-leucine biosynthesis; L-leucine from 3-methyl-2-oxobutanoate: step 4/4. Its pathway is amino-acid biosynthesis; L-valine biosynthesis; L-valine from pyruvate: step 4/4. Acts on leucine, isoleucine and valine. This is Probable branched-chain-amino-acid aminotransferase (ilvE) from Aquifex aeolicus (strain VF5).